The chain runs to 182 residues: Ribosome maturation factor RimM (182 aa).

The PRC barrel domain occupies 103 to 182 (DGSYYWKDLM…TIEVDWDPGF (80 aa)).

The protein belongs to the RimM family. As to quaternary structure, binds ribosomal protein uS19.

Its subcellular location is the cytoplasm. Its function is as follows. An accessory protein needed during the final step in the assembly of 30S ribosomal subunit, possibly for assembly of the head region. Essential for efficient processing of 16S rRNA. May be needed both before and after RbfA during the maturation of 16S rRNA. It has affinity for free ribosomal 30S subunits but not for 70S ribosomes. The protein is Ribosome maturation factor RimM of Citrobacter koseri (strain ATCC BAA-895 / CDC 4225-83 / SGSC4696).